The sequence spans 520 residues: Vacuolar protein sorting-associated protein 9A (520 aa).

A VPS9 domain is found at 102 to 246 (VIADEKLFQK…ISNIDAKSIS (145 aa)). GTP-binding residues include asparagine 180 and aspartate 185. Disordered stretches follow at residues 267–331 (DSQT…AESI), 396–433 (LAPSSSPLQASSGFNTSKESEDHRRSSSDVQMTKETDR), and 464–520 (LVEG…EASE). Residues 287–323 (LQKTQSLNPKRENTLFQSKSSDSLSGTNELLNINSET) show a composition bias toward polar residues. Serine 330 carries the post-translational modification Phosphoserine. Positions 396-407 (LAPSSSPLQASS) are enriched in low complexity. Basic and acidic residues-rich tracts occupy residues 413 to 433 (KESEDHRRSSSDVQMTKETDR) and 464 to 497 (LVEGKDEERDSKVQGEVDAKDIELMKQIPKREGD).

Homodimer. The homodimer interacts with RABF2B. Interacts with RABF1 and RABF2A. As to expression, widely expressed.

In terms of biological role, functions as a guanine nucleotide exchange factor (GEF) for Rab small GTPases. Activates specifically RABF1, RABF2A and RABF2B proteins. Required for early stages of embryogenesis, cytokinesis, embryogenesis, and organ development. Is essential for the establishment or maintenance of the polar localization of the auxin efflux carrier PIN1. The sequence is that of Vacuolar protein sorting-associated protein 9A from Arabidopsis thaliana (Mouse-ear cress).